The following is a 1424-amino-acid chain: Serine/threonine-protein kinase LMTK3 (1424 aa).

The first 20 residues, 1 to 20, serve as a signal peptide directing secretion; it reads MPAPGALILLAAVSASGCLA. A helical transmembrane segment spans residues 40 to 60; sequence AVVLISCSGLLAFIFLLLTCL. The interval 74 to 95 is disordered; it reads NPEGEDCSGEYTPPAEETSSSQ. The Protein kinase domain maps to 133–411; it reads LSYLQEIGSG…SDLQLQLTYL (279 aa). Residues 139–147 and Lys164 contribute to the ATP site; that span reads IGSGWFGKV. The residue at position 232 (Ser232) is a Phosphoserine. Asp266 acts as the Proton acceptor in catalysis. 2 disordered regions span residues 413 to 465 and 486 to 516; these read SERP…PDDV and RGAGRGGGAPPWQPASAPPAPHTNPSNPFYE. Positions 418–439 are enriched in pro residues; the sequence is RPPPPPPPPRDGPFPWPWPPSH. Residue Arg490 is modified to Omega-N-methylarginine. Pro residues predominate over residues 496–507; it reads PWQPASAPPAPH. Phosphoserine is present on residues Ser531 and Ser535. Disordered regions lie at residues 544-666, 680-964, 976-1024, 1041-1313, and 1325-1424; these read EHGS…PLPC, LERG…MSPE, MSPK…APET, GLEM…RKRK, and LFDQ…PVEN. Positions 571-584 are enriched in polar residues; sequence QTPSEVPQLVSETW. Residues 638 to 647 show a composition bias toward acidic residues; sequence AEEEEEESSP. Residues 700–713 are compositionally biased toward basic and acidic residues; that stretch reads PPEDDSSLRAERGS. Residues 744-758 show a composition bias toward pro residues; it reads RGPPPAPPPPPPPPR. Residues 759–791 show a composition bias toward low complexity; that stretch reads ASAEPAASPDPPSALASPGSGLSSPGPKPGDSG. Pro residues predominate over residues 818 to 841; sequence PRAPPEPPDPGAPRPPPDPGPLPL. Residues 935 to 954 are compositionally biased toward basic and acidic residues; sequence DMKEKVAENGLESPEKEERA. Residues Ser947, Ser962, and Ser977 each carry the phosphoserine modification. Residues 994–1004 show a composition bias toward basic and acidic residues; sequence RNTERPPEIGP. A compositionally biased stretch (gly residues) spans 1084-1094; sequence GSGGRALGGVG. Positions 1095 to 1105 are enriched in low complexity; it reads TAPAGGPASAV. Residues 1167–1177 are compositionally biased toward basic and acidic residues; sequence DPLKPERKGPE. Residues 1200–1213 are compositionally biased toward low complexity; that stretch reads SRLSLALPPLTLTP. A compositionally biased stretch (gly residues) spans 1231-1241; sequence AAGGEAGGAGA. Positions 1245–1261 are enriched in acidic residues; it reads AEEDGEDEDEDEEDEEA. Basic and acidic residues predominate over residues 1262–1272; it reads AGSRDPGRTRE. A compositionally biased stretch (polar residues) spans 1329–1339; it reads ETPTNELSVQG. The span at 1348–1360 shows a compositional bias: pro residues; the sequence is STPPAPPTPPHPT.

Belongs to the protein kinase superfamily. Tyr protein kinase family. As to quaternary structure, interacts with ESR1. Interacts with AP-2 complex subunit alpha. Requires Mg(2+) as cofactor. In terms of processing, autophosphorylated. As to expression, expressed in brain. Predominantly expressed in cerebral cortex, thalamus, the cerebellum and hippocampal formation (at protein level).

The protein localises to the membrane. It is found in the cell projection. Its subcellular location is the axon. It localises to the dendrite. The protein resides in the golgi apparatus membrane. It carries out the reaction L-seryl-[protein] + ATP = O-phospho-L-seryl-[protein] + ADP + H(+). The catalysed reaction is L-threonyl-[protein] + ATP = O-phospho-L-threonyl-[protein] + ADP + H(+). Functionally, protein kinase which phosphorylates ESR1 (in vitro) and protects it against proteasomal degradation. May also regulate ESR1 levels indirectly via a PKC-AKT-FOXO3 pathway where it decreases the activity of PKC and the phosphorylation of AKT, thereby increasing binding of transcriptional activator FOXO3 to the ESR1 promoter and increasing ESR1 transcription. Involved in endocytic trafficking of N-methyl-D-aspartate receptors (NMDAR) in neurons. The chain is Serine/threonine-protein kinase LMTK3 (Lmtk3) from Mus musculus (Mouse).